Consider the following 29-residue polypeptide: TALPQLRLPATSRILCAGVLEGGIDTCNR.

As to quaternary structure, monomer. Expressed by the venom gland.

Its subcellular location is the secreted. Functionally, thrombin-like snake venom serine protease. The protein is Thrombin-like enzyme collinein-2 of Crotalus durissus collilineatus (Brazilian rattlesnake).